The sequence spans 483 residues: Cobyric acid synthase (483 aa).

Positions 251-438 (ALIVAVPMLP…LHGVFSADRF (188 aa)) constitute a GATase cobBQ-type domain. Residue Cys333 is the Nucleophile of the active site. His430 is a catalytic residue.

Belongs to the CobB/CobQ family. CobQ subfamily.

It participates in cofactor biosynthesis; adenosylcobalamin biosynthesis. Functionally, catalyzes amidations at positions B, D, E, and G on adenosylcobyrinic A,C-diamide. NH(2) groups are provided by glutamine, and one molecule of ATP is hydrogenolyzed for each amidation. The chain is Cobyric acid synthase from Brucella suis (strain ATCC 23445 / NCTC 10510).